Here is a 173-residue protein sequence, read N- to C-terminus: Photosystem I assembly protein Ycf3 (173 aa).

TPR repeat units lie at residues 35–68 (AYLY…EDNQ), 72–105 (GETL…NPKQ), and 120–153 (GRMA…YPGG).

The protein belongs to the Ycf3 family.

It localises to the cellular thylakoid membrane. In terms of biological role, essential for the assembly of the photosystem I (PSI) complex. May act as a chaperone-like factor to guide the assembly of the PSI subunits. The sequence is that of Photosystem I assembly protein Ycf3 from Prochlorococcus marinus (strain NATL2A).